Consider the following 72-residue polypeptide: Arrestin-E (72 aa).

Belongs to the arrestin family. In terms of tissue distribution, adrenal, cerebral cortex, heart, hypothalamus, intestine, liver, lung, pituitary, retina and testis.

The protein is Arrestin-E (Ear) of Rattus norvegicus (Rat).